A 276-amino-acid chain; its full sequence is Urease accessory protein UreD (276 aa).

This sequence belongs to the UreD family. As to quaternary structure, ureD, UreF and UreG form a complex that acts as a GTP-hydrolysis-dependent molecular chaperone, activating the urease apoprotein by helping to assemble the nickel containing metallocenter of UreC. The UreE protein probably delivers the nickel.

The protein localises to the cytoplasm. Its function is as follows. Required for maturation of urease via the functional incorporation of the urease nickel metallocenter. The chain is Urease accessory protein UreD from Variovorax paradoxus (strain S110).